The chain runs to 100 residues: A-type ATP synthase subunit F (100 aa).

The protein belongs to the V-ATPase F subunit family. In terms of assembly, has multiple subunits with at least A(3), B(3), C, D, E, F, H, I and proteolipid K(x).

The protein resides in the cell membrane. In terms of biological role, component of the A-type ATP synthase that produces ATP from ADP in the presence of a proton gradient across the membrane. The protein is A-type ATP synthase subunit F of Methanocorpusculum labreanum (strain ATCC 43576 / DSM 4855 / Z).